A 479-amino-acid chain; its full sequence is Aspartyl/glutamyl-tRNA(Asn/Gln) amidotransferase subunit B (479 aa).

It belongs to the GatB/GatE family. GatB subfamily. As to quaternary structure, heterotrimer of A, B and C subunits.

The catalysed reaction is L-glutamyl-tRNA(Gln) + L-glutamine + ATP + H2O = L-glutaminyl-tRNA(Gln) + L-glutamate + ADP + phosphate + H(+). The enzyme catalyses L-aspartyl-tRNA(Asn) + L-glutamine + ATP + H2O = L-asparaginyl-tRNA(Asn) + L-glutamate + ADP + phosphate + 2 H(+). Functionally, allows the formation of correctly charged Asn-tRNA(Asn) or Gln-tRNA(Gln) through the transamidation of misacylated Asp-tRNA(Asn) or Glu-tRNA(Gln) in organisms which lack either or both of asparaginyl-tRNA or glutaminyl-tRNA synthetases. The reaction takes place in the presence of glutamine and ATP through an activated phospho-Asp-tRNA(Asn) or phospho-Glu-tRNA(Gln). In Streptococcus pyogenes serotype M12 (strain MGAS2096), this protein is Aspartyl/glutamyl-tRNA(Asn/Gln) amidotransferase subunit B.